The primary structure comprises 166 residues: Phosphopantetheine adenylyltransferase (166 aa).

Thr10 is a substrate binding site. ATP is bound by residues 10-11 and His18; that span reads TF. Substrate contacts are provided by Lys42, Leu74, and Arg88. Residues 89-91, Glu99, and 124-130 each bind ATP; these read GLR and NSFISSS.

This sequence belongs to the bacterial CoaD family. As to quaternary structure, homohexamer. Mg(2+) serves as cofactor.

It is found in the cytoplasm. It catalyses the reaction (R)-4'-phosphopantetheine + ATP + H(+) = 3'-dephospho-CoA + diphosphate. The protein operates within cofactor biosynthesis; coenzyme A biosynthesis; CoA from (R)-pantothenate: step 4/5. In terms of biological role, reversibly transfers an adenylyl group from ATP to 4'-phosphopantetheine, yielding dephospho-CoA (dPCoA) and pyrophosphate. The chain is Phosphopantetheine adenylyltransferase from Idiomarina loihiensis (strain ATCC BAA-735 / DSM 15497 / L2-TR).